The following is a 327-amino-acid chain: MDLYPEENTQSEQSQNSENNMQIFKSENSDGFSSDLMISNDQLKNISKTQLTLEKEKIFKMPNVLSQVMKRAFSRKNEILYCVSTKELSVDIHDATGKVYLPLITREEINKRLSSLKPEVRKTMSMVHLGAVKILLKAQFRNGIDTPIKIALIDDRINSRRDCLLGAAKGNLAYGKFMFTVYPKFGISLNTQRLNQTLSLIHDFENKNLMNKGDKVMTITYMVGYALTNSHHSIDYQSNATIELEDVFQEIGNVHESDFCTIQNDECNWAIDIAQNKALLGAKTKSQIGNNLQIGNSASSSNTENELARVSQNIDLLKNKLKEICGE.

The stretch at 297–327 (SASSSNTENELARVSQNIDLLKNKLKEICGE) forms a coiled coil.

Belongs to the caulimoviridae movement protein family. As to quaternary structure, homotrimer, through the coiled-coil domain. Interacts with VAP. May interact (via N-terminus) with host prenylated Rab acceptor protein 1D (PRA1D).

Its subcellular location is the host cell junction. The protein resides in the host plasmodesma. Functionally, transports viral genome to neighboring plant cells directly through plasmosdesmata, without any budding. The movement protein allows efficient cell to cell propagation, by bypassing the host cell wall barrier. Acts by forming tubules structures that increase the size exclusion limit (SEL) of plasmodesmata, thereby allowing viral ribonucleocapsids to spread directly to neighboring cells. In Arabidopsis thaliana (Mouse-ear cress), this protein is Movement protein.